The following is a 269-amino-acid chain: Zinc transporter ZupT (269 aa).

A run of 8 helical transmembrane segments spans residues 12-32 (AFSI…LVMF), 41-61 (LSFG…TEIF), 75-95 (DHAF…IALI), 126-146 (MMAA…TFFA), 152-172 (AVGM…GISI), 187-207 (VWAC…GYLV), 211-231 (FLSP…MVFL), and 249-269 (TVYG…LFHF). Fe(2+)-binding residues include N136 and E139. Zn(2+)-binding residues include E139 and H164. N165, E168, and E197 together coordinate Fe(2+). Position 168 (E168) interacts with Zn(2+).

It belongs to the ZIP transporter (TC 2.A.5) family. ZupT subfamily.

It is found in the cell inner membrane. The enzyme catalyses Zn(2+)(in) = Zn(2+)(out). Mediates zinc uptake. May also transport other divalent cations. The chain is Zinc transporter ZupT from Neisseria meningitidis serogroup A / serotype 4A (strain DSM 15465 / Z2491).